The chain runs to 275 residues: Fructose permease IID component (275 aa).

The 270-residue stretch at 5–274 (KRLTKKEIFS…GILGYWAGFL (270 aa)) folds into the PTS EIID domain. 5 helical membrane-spanning segments follow: residues 100-120 (MKIG…WGTI), 127-147 (LGAS…FFLL), 187-207 (ILGL…NIPI), 227-247 (VLDS…VAWM), and 255-275 (LLII…GFLA).

It is found in the cell membrane. In terms of biological role, the phosphoenolpyruvate-dependent sugar phosphotransferase system (PTS), a major carbohydrate active -transport system, catalyzes the phosphorylation of incoming sugar substrates concomitant with their translocation across the cell membrane. This system is involved in fructose transport. The polypeptide is Fructose permease IID component (levG) (Bacillus subtilis (strain 168)).